The sequence spans 111 residues: ATP-dependent Clp protease adapter protein ClpS (111 aa).

It belongs to the ClpS family. Binds to the N-terminal domain of the chaperone ClpA.

Functionally, involved in the modulation of the specificity of the ClpAP-mediated ATP-dependent protein degradation. The polypeptide is ATP-dependent Clp protease adapter protein ClpS (Leptospira interrogans serogroup Icterohaemorrhagiae serovar copenhageni (strain Fiocruz L1-130)).